The following is a 618-amino-acid chain: Transcriptional regulator CPUR_05421 (618 aa).

The zn(2)-C6 fungal-type DNA-binding region spans 14–41; sequence CSHLVGREIGCSRDLAGCRRCTSEGRAC. The tract at residues 52-87 is disordered; that stretch reads TRRRNRANQDVTRSALYSSNTTPQTISDQATGRPCE. Residues 59 to 81 show a composition bias toward polar residues; sequence NQDVTRSALYSSNTTPQTISDQA.

The protein resides in the nucleus. Its function is as follows. Transcriptional regulator; part of the ergochrome gene cluster responsible for the typical purple-black color of the ergot sclerotia. The ergochrome gene cluster produces several ergot pigments including the yellow ergochrome secalonic acid and its derivatives, as well as the red anthraquinones endocrocin and clavorubin. The polypeptide is Transcriptional regulator CPUR_05421 (Claviceps purpurea (strain 20.1) (Ergot fungus)).